The primary structure comprises 343 residues: MPIICKSKCGNRAALKRPKTGDALCKECFFAAFEAEIHHTISSSNLFRRGEKVAVAASGGKDSTVLAHVLKLLNERHNYGLELVLLSIDEGITGYRDDSLETVKQNRDDYQMPLKILSYEELYGWTMDRIVAQIGRSNNCTFCGVFRRQALDRGAKLLGVDSIATGHNADDIAETVLMNVLRGDTARLRRCTSIRTGGGEDSIPRVKPLKYSYEKEIVMYAHYKKLVYFSTECVFAPNAYRGHARAFLKDLEKVRPSVIMDIIYSGEQLRFKDTVKKPERGTCTRCGFVSSQQPCKACVLLEGLNRGLPKLGIGKKTKGERMIAKQNQELALRERANLVKNDF.

It belongs to the TtcA family. CTU1/NCS6/ATPBD3 subfamily.

Its subcellular location is the cytoplasm. It participates in tRNA modification; 5-methoxycarbonylmethyl-2-thiouridine-tRNA biosynthesis. Functionally, plays a central role in 2-thiolation of mcm(5)S(2)U at tRNA wobble positions of tRNA(Lys), tRNA(Glu) and tRNA(Gln). Directly binds tRNAs and probably acts by catalyzing adenylation of tRNAs, an intermediate required for 2-thiolation. It is unclear whether it acts as a sulfurtransferase that transfers sulfur from thiocarboxylated URM1 onto the uridine of tRNAs at wobble position. The sequence is that of Cytoplasmic tRNA 2-thiolation protein 1 from Drosophila sechellia (Fruit fly).